We begin with the raw amino-acid sequence, 259 residues long: Hydroxyethylthiazole kinase 1 (259 aa).

M38 provides a ligand contact to substrate. ATP contacts are provided by R113 and S158. Position 185 (G185) interacts with substrate.

This sequence belongs to the Thz kinase family. Mg(2+) serves as cofactor.

It carries out the reaction 5-(2-hydroxyethyl)-4-methylthiazole + ATP = 4-methyl-5-(2-phosphooxyethyl)-thiazole + ADP + H(+). It participates in cofactor biosynthesis; thiamine diphosphate biosynthesis; 4-methyl-5-(2-phosphoethyl)-thiazole from 5-(2-hydroxyethyl)-4-methylthiazole: step 1/1. Catalyzes the phosphorylation of the hydroxyl group of 4-methyl-5-beta-hydroxyethylthiazole (THZ). The sequence is that of Hydroxyethylthiazole kinase 1 from Leuconostoc mesenteroides subsp. mesenteroides (strain ATCC 8293 / DSM 20343 / BCRC 11652 / CCM 1803 / JCM 6124 / NCDO 523 / NBRC 100496 / NCIMB 8023 / NCTC 12954 / NRRL B-1118 / 37Y).